The following is a 130-amino-acid chain: Protein ApaG (130 aa).

Residues 3 to 127 (SEVTRSIRVT…FSLDSPHGRS (125 aa)) enclose the ApaG domain.

In Rhodospirillum centenum (strain ATCC 51521 / SW), this protein is Protein ApaG.